A 919-amino-acid polypeptide reads, in one-letter code: Phosphoenolpyruvate carboxylase (919 aa).

Catalysis depends on residues His138 and Lys579.

The protein belongs to the PEPCase type 1 family. Requires Mg(2+) as cofactor.

The catalysed reaction is oxaloacetate + phosphate = phosphoenolpyruvate + hydrogencarbonate. Functionally, forms oxaloacetate, a four-carbon dicarboxylic acid source for the tricarboxylic acid cycle. The sequence is that of Phosphoenolpyruvate carboxylase (ppc) from Corynebacterium efficiens (strain DSM 44549 / YS-314 / AJ 12310 / JCM 11189 / NBRC 100395).